The sequence spans 38 residues: APAKRWFGHEECTYWLGPCEVDDTCCSASCESKFCGLW.

Positions 1 to 5 are excised as a propeptide; that stretch reads APAKR. The residue at position 6 (Trp-6) is a 6'-bromotryptophan. Residues Glu-10 and Glu-11 each carry the 4-carboxyglutamate modification. 3 disulfides stabilise this stretch: Cys-12-Cys-26, Cys-19-Cys-30, and Cys-25-Cys-35. Trp-15 carries the 6'-bromotryptophan modification. A 4-carboxyglutamate mark is found at Glu-20 and Glu-31. Residue Trp-38 is modified to 6'-bromotryptophan.

The protein belongs to the conotoxin O2 superfamily. Expressed by the venom duct.

Its subcellular location is the secreted. Functionally, induces a sleep-like state in mice. The sequence is that of Conotoxin r7a from Conus radiatus (Rayed cone).